The following is a 311-amino-acid chain: tRNA-cytidine(32) 2-sulfurtransferase (311 aa).

Residues 47–52 (SGGKDS) carry the PP-loop motif motif. [4Fe-4S] cluster is bound by residues Cys-122, Cys-125, and Cys-213.

This sequence belongs to the TtcA family. As to quaternary structure, homodimer. Mg(2+) is required as a cofactor. It depends on [4Fe-4S] cluster as a cofactor.

It localises to the cytoplasm. The enzyme catalyses cytidine(32) in tRNA + S-sulfanyl-L-cysteinyl-[cysteine desulfurase] + AH2 + ATP = 2-thiocytidine(32) in tRNA + L-cysteinyl-[cysteine desulfurase] + A + AMP + diphosphate + H(+). It participates in tRNA modification. Functionally, catalyzes the ATP-dependent 2-thiolation of cytidine in position 32 of tRNA, to form 2-thiocytidine (s(2)C32). The sulfur atoms are provided by the cysteine/cysteine desulfurase (IscS) system. This Salmonella paratyphi A (strain ATCC 9150 / SARB42) protein is tRNA-cytidine(32) 2-sulfurtransferase.